The sequence spans 397 residues: MSLWKKTLYKSVCLALALLVAVTVFQRSVTPGQFLQDPLPPTLGPPKTGSLVNPNSFWKSSKDVVAPTPTVPRGPQVWDVVTTNCSINVNLTHQPWFQNLEPHFRQFLAYQHCRYFPMLLNHPEKCAGDVYLLVVVKSVITQHDRREVIRQTWGHEWESAGPDRGAVRTLFLLGTASKQEERTHYQQLLAYEDRLYGDILQWDFLDSFFNLTLKEIHFLKWLDIYCPNVPFIFKGDDDVFVNPTNLLEFLSDRQPQENLFVGDVLKHARPIRKKDNKYYIPAVMYSKATYPPYAGGGGFLMSGSLARQLHHACDTLELFPIDDVFLGMCLEVLGVKPTGHEGFKTFGISRVRGSRMNKEPCFYRSMLVVHKLLPAELLAMWDLVHSNLTCSLKFQVL.

Residues 1–6 are Cytoplasmic-facing; sequence MSLWKK. Residues 7–26 form a helical; Signal-anchor for type II membrane protein membrane-spanning segment; the sequence is TLYKSVCLALALLVAVTVFQ. The Lumenal segment spans residues 27–397; it reads RSVTPGQFLQ…LTCSLKFQVL (371 aa). 4 N-linked (GlcNAc...) asparagine glycosylation sites follow: asparagine 84, asparagine 90, asparagine 210, and asparagine 387.

The protein belongs to the glycosyltransferase 31 family.

The protein localises to the golgi apparatus membrane. It participates in protein modification; protein glycosylation. N-acetyl glucosamine (GlcNAc) transferase that catalyzes the transfer of GlcNAc via a beta1-&gt;3 linkage from UDP-GlcNAc to the non-reducing terminal galactose (Gal) in the linearly growing chain of N- and O-linked keratan sulfate proteoglycans. Cooperates with B4GALT4 galactosyltransferase and CHST6 and CHST1 sulfotransferases to construct and elongate mono- and disulfated disaccharide units [-&gt;3Galbeta1-&gt;4(6-sulfoGlcNAcbeta)1-&gt;] and [-&gt;3(6-sulfoGalbeta)1-&gt;4(6-sulfoGlcNAcbeta)1-&gt;] within keratan sulfate polymer. Involved in biosynthesis of N-linked keratan sulfate proteoglycans in cornea, with an impact on proteoglycan fibril organization and corneal transparency. May play a role in the maintenance of tissue architecture by suppressing cellular motility and invasion. This is UDP-GlcNAc:betaGal beta-1,3-N-acetylglucosaminyltransferase 7 (B3gnt7) from Rattus norvegicus (Rat).